A 64-amino-acid chain; its full sequence is Disintegrin (64 aa).

Residues 1 to 64 (NSVHPCCDPV…SDCPRNRYNH (64 aa)) enclose the Disintegrin domain. Cystine bridges form between Cys-6-Cys-29, Cys-20-Cys-26, Cys-25-Cys-50, and Cys-38-Cys-57. Positions 42–44 (MLD) match the Cell attachment site; atypical (MLD) motif.

The protein belongs to the disintegrin family. Dimeric disintegrin subfamily. Heterodimer; disulfide-linked. In terms of tissue distribution, expressed by the venom gland.

The protein resides in the secreted. In terms of biological role, inhibits adhesion of cells expressing alpha-4/beta-1 (ITGA4/ITGB1) and alpha-4/beta-7 (ITGA4/ITGB7) integrins to the natural ligands vascular cell adhesion molecule 1 (VCAM-1) and mucosal addressin cell adhesion molecule 1 (MADCAM-1). The protein is Disintegrin of Echis carinatus (Saw-scaled viper).